Reading from the N-terminus, the 88-residue chain is MEYRKRVDALVFFSLLLLGYFAAHAHGKGHVTDDVGVSTPAKEGIMQGNGARCVVGFPPCKDNKCYCCIGGRTHARYSTMAECRHACF.

Positions Met-1–Gly-27 are cleaved as a signal peptide. A disulfide bridge links Cys-65 with Cys-87.

This sequence belongs to the MEG family. Expressed exclusively in endosperm.

The chain is Protein MATERNALLY EXPRESSED GENE 2 (MEG2) from Zea mays (Maize).